The following is an 830-amino-acid chain: Pentatricopeptide repeat-containing protein At5g55740, chloroplastic (830 aa).

A chloroplast-targeting transit peptide spans 1–59; the sequence is MASLPFNTIPNKVPFSVSSKPSSKHHDEQAHSPSSTSYFHRVSSLCKNGEIKEALSLVT. A disordered region spans residues 15-36; that stretch reads FSVSSKPSSKHHDEQAHSPSST. PPR repeat units lie at residues 69 to 103, 106 to 136, 137 to 171, 172 to 206, 207 to 237, 238 to 272, 273 to 307, 308 to 338, 339 to 373, 374 to 408, 409 to 439, 440 to 474, 475 to 509, 510 to 544, 545 to 575, 581 to 611, 612 to 646, 647 to 682, and 683 to 713; these read GPEI…GDFY, NEYI…LRVR, NVFS…EIFP, DNFV…GLED, CVFV…IPDR, NAVA…GVEP, TRVT…GMEL, DNIL…MFEK, DVVT…KLKY, DCVT…SFES, DIVL…TVEK, DLIL…GVPP, NVIT…GIIP, NLIS…GLRP, NAFS…IIRN, LVSI…KLYS, ELPL…GLKP, DNIT…SMKP, and CLEH…MPFK. Residues 718–793 are type E motif; sequence MIQSLVASCN…KPGCSWIQIT (76 aa). The interval 796–826 is type E(+) motif; it reads EGVHVFVANDKTHTRINEIQMMLALLLYDMG.

It belongs to the PPR family. PCMP-E subfamily.

It localises to the plastid. Its subcellular location is the chloroplast. Functionally, plays a major role in chloroplast RNA editing. Acts as a site-recognition transacting factor involved in the edition of the site 2 of ndhD (ndhD-2), which encodes a subunit of the NDH complex. This chain is Pentatricopeptide repeat-containing protein At5g55740, chloroplastic (CRR21), found in Arabidopsis thaliana (Mouse-ear cress).